The sequence spans 202 residues: Large ribosomal subunit protein bL25 (202 aa).

The tract at residues 182-202 (QTAPEEEEGTAAETTEPELAE) is disordered. The segment covering 185-202 (PEEEEGTAAETTEPELAE) has biased composition (acidic residues).

This sequence belongs to the bacterial ribosomal protein bL25 family. CTC subfamily. In terms of assembly, part of the 50S ribosomal subunit; part of the 5S rRNA/L5/L18/L25 subcomplex. Contacts the 5S rRNA. Binds to the 5S rRNA independently of L5 and L18.

This is one of the proteins that binds to the 5S RNA in the ribosome where it forms part of the central protuberance. In Enterococcus faecalis (strain ATCC 700802 / V583), this protein is Large ribosomal subunit protein bL25.